Consider the following 236-residue polypeptide: 2-C-methyl-D-erythritol 4-phosphate cytidylyltransferase (236 aa).

It belongs to the IspD/TarI cytidylyltransferase family. IspD subfamily. In terms of assembly, homodimer.

It carries out the reaction 2-C-methyl-D-erythritol 4-phosphate + CTP + H(+) = 4-CDP-2-C-methyl-D-erythritol + diphosphate. Its pathway is isoprenoid biosynthesis; isopentenyl diphosphate biosynthesis via DXP pathway; isopentenyl diphosphate from 1-deoxy-D-xylulose 5-phosphate: step 2/6. Catalyzes the formation of 4-diphosphocytidyl-2-C-methyl-D-erythritol from CTP and 2-C-methyl-D-erythritol 4-phosphate (MEP). The chain is 2-C-methyl-D-erythritol 4-phosphate cytidylyltransferase from Enterobacter sp. (strain 638).